Consider the following 464-residue polypeptide: E3 ubiquitin-protein ligase RNF38 (464 aa).

The segment at 1–94 is disordered; sequence MRESEDSPSP…NSISQDENYH (94 aa). The Bipartite nuclear localization signal 1 motif lies at 6–20; sequence DSPSPKRQRLSHSVF. Residues 38-53 show a composition bias toward polar residues; it reads MTSNRQPPSVRPNQHH. Residues 64–79 carry the Bipartite nuclear localization signal 2 motif; that stretch reads RNRRSPPVRRQRGRRE. The segment covering 64 to 83 has biased composition (basic residues); that stretch reads RNRRSPPVRRQRGRRERLSR. The segment at 412 to 453 adopts an RING-type zinc-finger fold; the sequence is CVVCMCDFESRQLLRVLPCNHEFHAKCVDKWLKGNRTCPICR.

It is found in the nucleus. The catalysed reaction is S-ubiquitinyl-[E2 ubiquitin-conjugating enzyme]-L-cysteine + [acceptor protein]-L-lysine = [E2 ubiquitin-conjugating enzyme]-L-cysteine + N(6)-ubiquitinyl-[acceptor protein]-L-lysine.. Its pathway is protein modification; protein ubiquitination. In terms of biological role, acts as an E3 ubiquitin-protein ligase able to ubiquitinate p53/TP53 which promotes its relocalization to discrete foci associated with PML nuclear bodies. Exhibits preference for UBE2D2 as a E2 enzyme. The chain is E3 ubiquitin-protein ligase RNF38 from Mus musculus (Mouse).